A 244-amino-acid chain; its full sequence is Myosin-7 (244 aa).

A rodlike tail (S2 and LMM domains) region spans residues 1–244 (VEQTERSRKL…DIGTKGLNEE (244 aa)). Residues 1-244 (VEQTERSRKL…DIGTKGLNEE (244 aa)) adopt a coiled-coil conformation. Positions 216 to 244 (EERADIAESQVNKLRAKSRDIGTKGLNEE) are disordered. Over residues 232 to 244 (KSRDIGTKGLNEE) the composition is skewed to basic and acidic residues.

As to quaternary structure, muscle myosin is a hexameric protein that consists of 2 heavy chain subunits (MHC), 2 alkali light chain subunits (MLC) and 2 regulatory light chain subunits (MLC-2). Interacts with ECPAS. Interacts (via C-terminus) with LRRC39.

It localises to the cytoplasm. The protein localises to the myofibril. It is found in the sarcomere. In terms of biological role, myosins are actin-based motor molecules with ATPase activity essential for muscle contraction. Forms regular bipolar thick filaments that, together with actin thin filaments, constitute the fundamental contractile unit of skeletal and cardiac muscle. The polypeptide is Myosin-7 (MYH7) (Papio hamadryas (Hamadryas baboon)).